We begin with the raw amino-acid sequence, 436 residues long: Small ribosomal subunit protein uS5m (436 aa).

One can recognise an S5 DRBM domain in the interval 152–218 (FETYCLEVKR…GMASRKLFHV (67 aa)). Residues 417 to 436 (GVEPMPLGIGLSHVVPKKDD) are disordered.

The protein belongs to the universal ribosomal protein uS5 family. As to quaternary structure, component of the mitochondrial ribosome small subunit (28S) which comprises a 12S rRNA and about 30 distinct proteins.

Its subcellular location is the mitochondrion. The sequence is that of Small ribosomal subunit protein uS5m (mrps-5) from Caenorhabditis elegans.